A 119-amino-acid polypeptide reads, in one-letter code: Large ribosomal subunit protein bL20 (119 aa).

The protein belongs to the bacterial ribosomal protein bL20 family.

Binds directly to 23S ribosomal RNA and is necessary for the in vitro assembly process of the 50S ribosomal subunit. It is not involved in the protein synthesizing functions of that subunit. In Jannaschia sp. (strain CCS1), this protein is Large ribosomal subunit protein bL20.